The sequence spans 398 residues: 1-deoxy-D-xylulose 5-phosphate reductoisomerase (398 aa).

Positions 11, 12, 13, 14, 38, 39, and 125 each coordinate NADPH. A 1-deoxy-D-xylulose 5-phosphate-binding site is contributed by lysine 126. Position 127 (glutamate 127) interacts with NADPH. Aspartate 151 is a Mn(2+) binding site. Positions 152, 153, 179, and 202 each coordinate 1-deoxy-D-xylulose 5-phosphate. Mn(2+) is bound at residue glutamate 153. Glycine 208 is an NADPH binding site. 1-deoxy-D-xylulose 5-phosphate contacts are provided by serine 215, asparagine 220, lysine 221, and glutamate 224. Glutamate 224 lines the Mn(2+) pocket.

Belongs to the DXR family. Mg(2+) serves as cofactor. Requires Mn(2+) as cofactor.

It catalyses the reaction 2-C-methyl-D-erythritol 4-phosphate + NADP(+) = 1-deoxy-D-xylulose 5-phosphate + NADPH + H(+). The protein operates within isoprenoid biosynthesis; isopentenyl diphosphate biosynthesis via DXP pathway; isopentenyl diphosphate from 1-deoxy-D-xylulose 5-phosphate: step 1/6. Functionally, catalyzes the NADPH-dependent rearrangement and reduction of 1-deoxy-D-xylulose-5-phosphate (DXP) to 2-C-methyl-D-erythritol 4-phosphate (MEP). The sequence is that of 1-deoxy-D-xylulose 5-phosphate reductoisomerase from Burkholderia mallei (strain NCTC 10247).